The sequence spans 27 residues: Caerulein precursor fragment R4 (27 aa).

In terms of tissue distribution, expressed by the skin glands.

It localises to the secreted. Antimicrobial peptide. This is Caerulein precursor fragment R4 from Xenopus ruwenzoriensis (Uganda clawed frog).